The sequence spans 1089 residues: Ankyrin repeat and IBR domain-containing protein 1 (1089 aa).

Glycine 2 is lipidated: N-myristoyl glycine. ANK repeat units follow at residues 45-74 (QHNTPLHYAARHGMNKILGTFLGRDGNPNK) and 144-173 (KKNTPLHYAAASGMKACVELLVKHGGDLFA). The tract at residues 281 to 321 (CQRSGVQMPTPPPSGYNAWDTLPSPRTPRTTRSSVTSPDEI) is disordered. Over residues 303-318 (PSPRTPRTTRSSVTSP) the composition is skewed to low complexity. The TRIAD supradomain stretch occupies residues 329–569 (DTSLCDICMC…GGYYRCTRYE (241 aa)). 14 residues coordinate Zn(2+): cysteine 333, cysteine 336, cysteine 351, histidine 353, cysteine 356, cysteine 359, cysteine 378, cysteine 383, cysteine 465, cysteine 468, histidine 473, cysteine 478, cysteine 519, and cysteine 522. The RING-type 1 zinc finger occupies 333-383 (CDICMCSISVFEDPVDMPCGHDFCRGCWESFLNLKIQEGEAHNIFCPAYDC). The IBR-type zinc finger occupies 401-478 (DKRYLQFDIK…LGEAHEPCDC (78 aa)). Residues 519 to 548 (CANCKSPIQKNEGCNHMQCAKCKYDFCWIC) form an RING-type 2; atypical zinc finger. Cysteine 532 is an active-site residue. Residues cysteine 537, cysteine 540, cysteine 545, cysteine 548, histidine 555, and cysteine 565 each coordinate Zn(2+). Residues 575-640 (EEQSKEMTVE…RALKETEGGC (66 aa)) adopt a coiled-coil conformation. Residue serine 737 is modified to Phosphoserine. Residues 776-821 (RRGDVHSLLSNPPDPDEPSESTLDIPEGGSSSRRPGTSVVSSASMS) form a disordered region. Positions 851 to 870 (EDDPNILLAIQLSLQESGLA) constitute a UIM domain. A phosphoserine mark is found at serine 884 and serine 911. Disordered regions lie at residues 889–912 (GTSLPSRLDSVPRNTDSPRAALSS), 927–964 (AENDPFSTDTLSSHPLSEARSDFCPSSSDPDSAGQDPN), and 1026–1089 (DASV…VHLV). Composition is skewed to polar residues over residues 931–941 (PFSTDTLSSHP) and 1070–1082 (DVSSQTPQTSSDW).

This sequence belongs to the RBR family.

It carries out the reaction [E2 ubiquitin-conjugating enzyme]-S-ubiquitinyl-L-cysteine + [acceptor protein]-L-lysine = [E2 ubiquitin-conjugating enzyme]-L-cysteine + [acceptor protein]-N(6)-ubiquitinyl-L-lysine.. Its function is as follows. Might act as an E3 ubiquitin-protein ligase, or as part of E3 complex, which accepts ubiquitin from specific E2 ubiquitin-conjugating enzymes and then transfers it to substrates. The polypeptide is Ankyrin repeat and IBR domain-containing protein 1 (ANKIB1) (Homo sapiens (Human)).